The following is a 156-amino-acid chain: 6,7-dimethyl-8-ribityllumazine synthase (156 aa).

Residues F22, 57–59, and 81–83 contribute to the 5-amino-6-(D-ribitylamino)uracil site; these read AVE and TVI. 86–87 contributes to the (2S)-2-hydroxy-3-oxobutyl phosphate binding site; sequence GT. The Proton donor role is filled by H89. F114 provides a ligand contact to 5-amino-6-(D-ribitylamino)uracil. R128 contributes to the (2S)-2-hydroxy-3-oxobutyl phosphate binding site.

This sequence belongs to the DMRL synthase family. Forms an icosahedral capsid composed of 60 subunits, arranged as a dodecamer of pentamers.

The catalysed reaction is (2S)-2-hydroxy-3-oxobutyl phosphate + 5-amino-6-(D-ribitylamino)uracil = 6,7-dimethyl-8-(1-D-ribityl)lumazine + phosphate + 2 H2O + H(+). The protein operates within cofactor biosynthesis; riboflavin biosynthesis; riboflavin from 2-hydroxy-3-oxobutyl phosphate and 5-amino-6-(D-ribitylamino)uracil: step 1/2. Functionally, catalyzes the formation of 6,7-dimethyl-8-ribityllumazine by condensation of 5-amino-6-(D-ribitylamino)uracil with 3,4-dihydroxy-2-butanone 4-phosphate. This is the penultimate step in the biosynthesis of riboflavin. In Vibrio campbellii (strain ATCC BAA-1116), this protein is 6,7-dimethyl-8-ribityllumazine synthase.